The following is a 212-amino-acid chain: Ubiquitin-like protein MDY2 (212 aa).

Residues 74 to 152 (VHLTLKKIQA…TITVMIKPNP (79 aa)) form the Ubiquitin-like domain. Residues 150–177 (PNPTISKEPEAEKSTNSPAPAPPQELTV) form a disordered region.

As to quaternary structure, interacts with GET4.

Its subcellular location is the cytoplasm. The protein resides in the cytosol. The protein localises to the nucleus. In terms of biological role, required for efficient mating. Involved in the production of alpha-factor, the KAR9 and TUB1 location to the shmoo tip and nuclear migration into pheromone-induced shmoos. The protein is Ubiquitin-like protein MDY2 (MDY2) of Saccharomyces cerevisiae (strain ATCC 204508 / S288c) (Baker's yeast).